A 130-amino-acid chain; its full sequence is Small ribosomal subunit protein uS11 (130 aa).

This sequence belongs to the universal ribosomal protein uS11 family. As to quaternary structure, part of the 30S ribosomal subunit. Interacts with proteins S7 and S18. Binds to IF-3.

Functionally, located on the platform of the 30S subunit, it bridges several disparate RNA helices of the 16S rRNA. Forms part of the Shine-Dalgarno cleft in the 70S ribosome. In Xanthomonas oryzae pv. oryzae (strain MAFF 311018), this protein is Small ribosomal subunit protein uS11.